The following is a 551-amino-acid chain: Glucose-6-phosphate isomerase (551 aa).

Glu349 serves as the catalytic Proton donor. Active-site residues include His378 and Lys480.

Belongs to the GPI family.

The protein resides in the cytoplasm. The catalysed reaction is alpha-D-glucose 6-phosphate = beta-D-fructose 6-phosphate. Its pathway is carbohydrate biosynthesis; gluconeogenesis. The protein operates within carbohydrate degradation; glycolysis; D-glyceraldehyde 3-phosphate and glycerone phosphate from D-glucose: step 2/4. Catalyzes the reversible isomerization of glucose-6-phosphate to fructose-6-phosphate. In Parasynechococcus marenigrum (strain WH8102), this protein is Glucose-6-phosphate isomerase.